Reading from the N-terminus, the 176-residue chain is NAD(P)H-quinone oxidoreductase subunit 6, chloroplastic (176 aa).

The next 5 helical transmembrane spans lie at 10–30 (FLLV…VLLP), 32–52 (PIYS…FYIL), 61–81 (AQLL…VMFM), 92–112 (LWTV…ISLI), and 152–172 (FFLP…GAIA).

This sequence belongs to the complex I subunit 6 family. In terms of assembly, NDH is composed of at least 16 different subunits, 5 of which are encoded in the nucleus.

The protein resides in the plastid. The protein localises to the chloroplast thylakoid membrane. It carries out the reaction a plastoquinone + NADH + (n+1) H(+)(in) = a plastoquinol + NAD(+) + n H(+)(out). It catalyses the reaction a plastoquinone + NADPH + (n+1) H(+)(in) = a plastoquinol + NADP(+) + n H(+)(out). In terms of biological role, NDH shuttles electrons from NAD(P)H:plastoquinone, via FMN and iron-sulfur (Fe-S) centers, to quinones in the photosynthetic chain and possibly in a chloroplast respiratory chain. The immediate electron acceptor for the enzyme in this species is believed to be plastoquinone. Couples the redox reaction to proton translocation, and thus conserves the redox energy in a proton gradient. The polypeptide is NAD(P)H-quinone oxidoreductase subunit 6, chloroplastic (ndhG) (Solanum tuberosum (Potato)).